Here is a 98-residue protein sequence, read N- to C-terminus: NADH-ubiquinone oxidoreductase chain 4L (98 aa).

3 helical membrane-spanning segments follow: residues 1-21 (MSMV…GLLM), 29-49 (SLLC…VTIL), and 61-81 (IILL…LVMV).

This sequence belongs to the complex I subunit 4L family. As to quaternary structure, core subunit of respiratory chain NADH dehydrogenase (Complex I) which is composed of 45 different subunits.

It localises to the mitochondrion inner membrane. The enzyme catalyses a ubiquinone + NADH + 5 H(+)(in) = a ubiquinol + NAD(+) + 4 H(+)(out). In terms of biological role, core subunit of the mitochondrial membrane respiratory chain NADH dehydrogenase (Complex I) which catalyzes electron transfer from NADH through the respiratory chain, using ubiquinone as an electron acceptor. Part of the enzyme membrane arm which is embedded in the lipid bilayer and involved in proton translocation. In Callorhinus ursinus (Northern fur seal), this protein is NADH-ubiquinone oxidoreductase chain 4L (MT-ND4L).